The chain runs to 546 residues: MNSNTKIIFVTGGVVSSLGKGVTAASLATLLESRGLNVTMMKLDPYINVDPGTMSPLQHGEVFVTEDGAETDLDLGHYERFIRNKMTQANNFTTGKVYQSVLRRERKGDYLGATIQVIPHITDEIKRRICSGIADDVDVVIVEIGGTVGDIESQPFLEAIRQLRIELGRNRTLFVHLTLLPYIKVAGEIKTKPTQHSVKELRGIGIQADVLVCRCEKKFDDSEKRKIALFTNVDQDCIFTAEDVDTIYEVPLKYNQQGFDAKLVELLNLNAKEADLSEWQNVVNTIIDVKGEVTIAMVGKYVSLTEAYKSLNEALYNAGYKKGVKVKIKFVDSEDVNENNVESYFKDVAAILVPGGFGSRGIEGKIISIKYARENQIPFLGICLGMQLAVIEYARNILGIKDAHSSELEPTTANPVIGLITEWQAEDGTVHQRTHSSDLGGTMRLGGYKCVLKQGSRAREIYQADEVVERHRHRYEVNSNYVERLEEAGLIFSGRSEDNKLMELIEIPQHKWFIACQAHPEFTSTPRYGHKLFESYIQAAIENSNN.

The tract at residues 1–269 (MNSNTKIIFV…DAKLVELLNL (269 aa)) is amidoligase domain. Position 16 (Ser-16) interacts with CTP. Ser-16 contacts UTP. ATP is bound by residues 17–22 (SLGKGV) and Asp-74. Positions 74 and 143 each coordinate Mg(2+). Residues 150-152 (DIE), 190-195 (KTKPTQ), and Lys-226 each bind CTP. UTP contacts are provided by residues 190–195 (KTKPTQ) and Lys-226. The Glutamine amidotransferase type-1 domain maps to 294 to 546 (TIAMVGKYVS…IQAAIENSNN (253 aa)). Gly-356 serves as a coordination point for L-glutamine. Cys-383 serves as the catalytic Nucleophile; for glutamine hydrolysis. L-glutamine contacts are provided by residues 384–387 (LGMQ), Glu-407, and Arg-474. Active-site residues include His-519 and Glu-521.

It belongs to the CTP synthase family. As to quaternary structure, homotetramer.

The catalysed reaction is UTP + L-glutamine + ATP + H2O = CTP + L-glutamate + ADP + phosphate + 2 H(+). It carries out the reaction L-glutamine + H2O = L-glutamate + NH4(+). The enzyme catalyses UTP + NH4(+) + ATP = CTP + ADP + phosphate + 2 H(+). It functions in the pathway pyrimidine metabolism; CTP biosynthesis via de novo pathway; CTP from UDP: step 2/2. Allosterically activated by GTP, when glutamine is the substrate; GTP has no effect on the reaction when ammonia is the substrate. The allosteric effector GTP functions by stabilizing the protein conformation that binds the tetrahedral intermediate(s) formed during glutamine hydrolysis. Inhibited by the product CTP, via allosteric rather than competitive inhibition. In terms of biological role, catalyzes the ATP-dependent amination of UTP to CTP with either L-glutamine or ammonia as the source of nitrogen. Regulates intracellular CTP levels through interactions with the four ribonucleotide triphosphates. This chain is CTP synthase, found in Francisella tularensis subsp. mediasiatica (strain FSC147).